A 264-amino-acid polypeptide reads, in one-letter code: ATP synthase subunit a (264 aa).

The next 5 membrane-spanning stretches (helical) occupy residues 39–59 (LDTLIISVVLGALFILIFYIV), 97–117 (VAPLALTIFIWVFLMNFMDLV), 139–159 (TADPTLTFAMSITVFVLVIFY), 205–225 (LFGNLFAGELIFILIALLPWW), and 239–259 (LLVITVQAFIFMMLTVVYISL).

Belongs to the ATPase A chain family. In terms of assembly, F-type ATPases have 2 components, CF(1) - the catalytic core - and CF(0) - the membrane proton channel. CF(1) has five subunits: alpha(3), beta(3), gamma(1), delta(1), epsilon(1). CF(0) has three main subunits: a(1), b(2) and c(9-12). The alpha and beta chains form an alternating ring which encloses part of the gamma chain. CF(1) is attached to CF(0) by a central stalk formed by the gamma and epsilon chains, while a peripheral stalk is formed by the delta and b chains.

It localises to the cell inner membrane. Key component of the proton channel; it plays a direct role in the translocation of protons across the membrane. In Coxiella burnetii (strain CbuK_Q154) (Coxiella burnetii (strain Q154)), this protein is ATP synthase subunit a.